Here is a 322-residue protein sequence, read N- to C-terminus: MSFRDALNLPSSEITDESVYRDRRRLLQLLALTPALGVAGCAEADPPPPPKTVVTPAQARSGFRTAEELTRLEDVTSYNNFYEFGTDKTDPSKAAKTLKLSPWTVKVGGECEKPGSLSLDELLKGIASEERIYRLRCVEGWSMVIPWTGVPLGEVLKRFAPTSKAKYVAFTTLADPQQMPGVRYRSINWPYREGLRIDEAMHPLTLLATGLYGKPLPQQNGAPLRLVVPWKYGFKSIKSIVEIRFVEKMPETAWHDLQPSEYGFFSNVNPAVDHPRWSQKTERRIAGTASKLFAERIATKPFNGYADQVASLYAGMDLKKWF.

Residues 1 to 59 (MSFRDALNLPSSEITDESVYRDRRRLLQLLALTPALGVAGCAEADPPPPPKTVVTPAQA) constitute a signal peptide (tat-type signal). Residues asparagine 79, 82-83 (YE), cysteine 137, threonine 172, asparagine 220, arginine 225, and 236-238 (SIK) each bind Mo-molybdopterin.

Belongs to the MsrP family. In terms of assembly, heterodimer of a catalytic subunit (MsrP) and a heme-binding subunit (MsrQ). It depends on Mo-molybdopterin as a cofactor. In terms of processing, predicted to be exported by the Tat system. The position of the signal peptide cleavage has not been experimentally proven.

Its subcellular location is the periplasm. It catalyses the reaction L-methionyl-[protein] + a quinone + H2O = L-methionyl-(S)-S-oxide-[protein] + a quinol. The catalysed reaction is L-methionyl-[protein] + a quinone + H2O = L-methionyl-(R)-S-oxide-[protein] + a quinol. Part of the MsrPQ system that repairs oxidized periplasmic proteins containing methionine sulfoxide residues (Met-O), using respiratory chain electrons. Thus protects these proteins from oxidative-stress damage caused by reactive species of oxygen and chlorine generated by the host defense mechanisms. MsrPQ is essential for the maintenance of envelope integrity under bleach stress, rescuing a wide series of structurally unrelated periplasmic proteins from methionine oxidation. The catalytic subunit MsrP is non-stereospecific, being able to reduce both (R-) and (S-) diastereoisomers of methionine sulfoxide. The polypeptide is Protein-methionine-sulfoxide reductase catalytic subunit MsrP (Xanthomonas axonopodis pv. citri (strain 306)).